Here is a 61-residue protein sequence, read N- to C-terminus: Small ribosomal subunit protein uS14 (61 aa).

Residues C24, C27, C40, and C43 each contribute to the Zn(2+) site.

This sequence belongs to the universal ribosomal protein uS14 family. Zinc-binding uS14 subfamily. As to quaternary structure, part of the 30S ribosomal subunit. Contacts proteins S3 and S10. Zn(2+) serves as cofactor.

In terms of biological role, binds 16S rRNA, required for the assembly of 30S particles and may also be responsible for determining the conformation of the 16S rRNA at the A site. This is Small ribosomal subunit protein uS14 from Clostridium botulinum (strain Alaska E43 / Type E3).